Consider the following 670-residue polypeptide: Putative segment polarity protein dishevelled homolog DVL1P1 (670 aa).

A DIX domain is found at 1 to 85 (MAETKIIYHM…RVVSWLVLVE (85 aa)). Positions 89-240 (SDAGSQGTDS…ADRASSFSSM (152 aa)) are disordered. Residues 142-151 (SHRRDRARRR) show a composition bias toward basic residues. Over residues 152–171 (NREEAARTNGHPRGDRRRDV) the composition is skewed to basic and acidic residues. Low complexity-rich tracts occupy residues 176–192 (DSASTALSSELESSSFV) and 201–214 (SRLSSSTEQSTSSR). Over residues 215 to 228 (LIRKHKRRRRKQRL) the composition is skewed to basic residues. In terms of domain architecture, PDZ spans 251–323 (TVTLNMERHH…NDDAVRVLRE (73 aa)). One can recognise a DEP domain in the interval 400–474 (PDSGLEIRDR…SEQCYYVFGD (75 aa)). Positions 518–642 (PGPPPCFPPA…PGGPPVRELA (125 aa)) are disordered. 2 stretches are compositionally biased toward low complexity: residues 526-553 (PAYQDPGFSYGSGSTGSQQSEGSKSSGS) and 600-614 (SRGSSPRSQASSYAP).

The protein belongs to the DSH family. Expressed in thymus, heart, liver, kidney, brain, skeletal muscle, and pancreas.

It localises to the cytoplasm. In terms of biological role, may play a role in the signal transduction pathway mediated by multiple Wnt genes. This Homo sapiens (Human) protein is Putative segment polarity protein dishevelled homolog DVL1P1 (DVL1P1).